A 266-amino-acid chain; its full sequence is MGSRPRSPSAFPAPWWGQQPGGPGPAKRLRLEEPAGPEPRVAPSLEDPAGTPAVGALTSIVVLAAGCALRVPLDDVDLVLELPPTSILRVSLDGHTLILIPEVLLSSVDERSGAQDDSSAGLEVDVFLGALREDVVVEQEVFCASVPEIAAQEEAYEEDADPEFPELQMDSAAGSAAGLYSSARSMFSPYREGPIPEPCALAPNPSSEGHSPGPFFDPEFRLLEPVPSSPLQPLPPSPRVGSPGPHAHPPLPKRPPCKARRRLFQE.

Residues 1-18 show a composition bias toward low complexity; sequence MGSRPRSPSAFPAPWWGQ. Disordered regions lie at residues 1 to 47 and 197 to 266; these read MGSR…SLED and EPCA…LFQE. Pro residues predominate over residues 227-238; it reads PSSPLQPLPPSP. The span at 255–266 shows a compositional bias: basic residues; it reads PPCKARRRLFQE.

Belongs to the PRR23 family.

The protein is Proline-rich protein 23A (PRR23A) of Homo sapiens (Human).